Here is a 411-residue protein sequence, read N- to C-terminus: G2/mitotic-specific cyclin cig2 (411 aa).

Residues 51-60 carry the Destruction box motif; that stretch reads RTVLSDVSNV. The tract at residues 57–89 is disordered; sequence VSNVGKNNADEKDTKKAKRSFDESNLSTNEEAD. The segment covering 64–78 has biased composition (basic and acidic residues); it reads NADEKDTKKAKRSFD. A Cyclin N-terminal domain is found at 139-265; that stretch reads EIFEYIRKLD…MLNVLNFDLS (127 aa). The tract at residues 181-273 is interaction with pop1; sequence SNFCLMPETL…LSYPSPLNFL (93 aa).

The protein belongs to the cyclin family. Cyclin AB subfamily. As to quaternary structure, associates with cdc2, res2 and rum1. Interacts with pop1 only when phosphorylated. Post-translationally, phosphorylated.

It localises to the nucleus. It is found in the cytoplasm. The protein resides in the cytoskeleton. The protein localises to the microtubule organizing center. Its subcellular location is the spindle pole body. Functionally, essential for the control of the cell cycle at the G2/M and G1/S (mitosis) transition. Interacts with the cdc2 protein kinase to form MPF. Interaction with res2 promotes the phosphorylation of res1 and inhibits MBF-dependent gene transcription. Forms an autoregulating feedback-inhibition loop with MBF which is important for normal regulation of the cell cycle. G2/M cyclins accumulate steadily during G2 and are abruptly destroyed at mitosis. Negatively regulates conjugation via interacting with cell cycle 'start' genes. Degraded by skp1, pop1 and pop2 in the G2 and M phases of the cell cycle. This Schizosaccharomyces pombe (strain 972 / ATCC 24843) (Fission yeast) protein is G2/mitotic-specific cyclin cig2 (cig2).